We begin with the raw amino-acid sequence, 307 residues long: Peroxisomal protein PEX21 (307 aa).

Cys-4 participates in a covalent cross-link: Glycyl cysteine thioester (Cys-Gly) (interchain with G-Cter in ubiquitin). Positions 23–52 are disordered; sequence VGRVGGFNRPSGGLGQSSAEQQLQARAGER.

Belongs to the peroxin-21 family. As to quaternary structure, interacts with PEX7. Monoubiquitinated at Cys-4; acts as a signal for PEX21 extraction and is required for proper export from peroxisomes and recycling.

The protein resides in the cytoplasm. Its subcellular location is the cytosol. The protein localises to the peroxisome. Mediates peroxisomal import of proteins containing a C-terminal PTS2-type peroxisomal targeting signal via its interaction with PEX7. Interaction with PEX7 only takes place when PEX7 is associated with cargo proteins containing a PTS2 peroxisomal targeting signal. PEX7 along with PTS2-containing cargo proteins are then translocated through the PEX13-PEX14 docking complex together with PEX21. The protein is Peroxisomal protein PEX21 (PEX21) of Eremothecium gossypii (strain ATCC 10895 / CBS 109.51 / FGSC 9923 / NRRL Y-1056) (Yeast).